The primary structure comprises 661 residues: Period circadian protein (661 aa).

Low complexity predominate over residues 1–34 (KVSDSAYSNSCSNSQSQRSGSSKSRLSGSHSSGS). Positions 1 to 151 (KVSDSAYSNS…RVEGVAKSEA (151 aa)) are disordered. Residues 53–66 (KRNKDKSRKKKKNK) carry the Nuclear localization signal motif. Over residues 53–66 (KRNKDKSRKKKKNK) the composition is skewed to basic residues. Positions 108–120 (ELQDQQHGEDHSE) are enriched in basic and acidic residues. PAS domains follow at residues 223–358 (DSFC…ATPI) and 376–482 (FAIR…RVFQ). The interval 582 to 661 (TNTSIAGTGG…VTLTESLLNK (80 aa)) is disordered. Positions 588-634 (GTGGTGTGTGTGTGTGTGTGTGTGTGTGTGTGTGTGTGTGTGTGNGT) are enriched in gly residues. 22 consecutive repeat copies span residues 591–592 (GT), 593–594 (GT), 595–596 (GT), 597–598 (GT), 599–600 (GT), 601–602 (GT), 603–604 (GT), 605–606 (GT), 607–608 (GT), 609–610 (GT), 611–612 (GT), 613–614 (GT), 615–616 (GT), 617–618 (GT), 619–620 (GT), 621–622 (GT), 623–624 (GT), 625–626 (GT), 627–628 (GT), 629–630 (GT), 631–632 (GN), and 633–634 (GT). The interval 591 to 638 (GTGTGTGTGTGTGTGTGTGTGTGTGTGTGTGTGTGTGTGTGNGTNSGT) is 24 X 2 AA approximate tandem repeats of G-[TN]. Residues 635 to 636 (NS) form a 23; approximate repeat. The segment covering 635 to 646 (NSGTTSSSRGGS) has biased composition (low complexity). Residues 637 to 638 (GT) form repeat 24.

In terms of assembly, forms a heterodimer with timeless (TIM); the complex then translocates into the nucleus. Phosphorylated with a circadian rhythmicity, probably by the double-time protein (dbt). Phosphorylation could be implicated in the stability of per monomer and in the formation of heterodimer per-tim.

It localises to the nucleus. The protein localises to the cytoplasm. The protein resides in the perinuclear region. Its function is as follows. Essential for biological clock functions. Determines the period length of circadian and ultradian rhythms; an increase in PER dosage leads to shortened circadian rhythms and a decrease leads to lengthened circadian rhythms. Essential for the circadian rhythmicity of locomotor activity, eclosion behavior, and for the rhythmic component of the male courtship song that originates in the thoracic nervous system. The biological cycle depends on the rhythmic formation and nuclear localization of the TIM-PER complex. Light induces the degradation of TIM, which promotes elimination of PER. Nuclear activity of the heterodimer coordinatively regulates PER and TIM transcription through a negative feedback loop. Behaves as a negative element in circadian transcriptional loop. Does not appear to bind DNA, suggesting indirect transcriptional inhibition. This is Period circadian protein (per) from Drosophila sechellia (Fruit fly).